Here is a 268-residue protein sequence, read N- to C-terminus: Proenkephalin-A (268 aa).

The first 24 residues, 1 to 24 (MARFLRLCTWLLVLGSCLLATVQA), serve as a signal peptide directing secretion. 3 disulfides stabilise this stretch: C26–C48, C30–C52, and C33–C65. Residues 162 to 185 (GTGDNRAREGRHQESTDNDDNMSK) form a disordered region. Residues 166 to 176 (NRAREGRHQES) show a composition bias toward basic and acidic residues. 2 consecutive propeptides follow at residues 197–208 (SPQVEDEAKELQ) and 218–228 (VGRPEWWMDYQ). S252 is subject to Phosphoserine.

Belongs to the opioid neuropeptide precursor family. Post-translationally, proenkephalin-A is cleaved by CTSL to generate Met-enkephalin. In terms of processing, processed and degraded by ACE. Probably cleaved by ACE. Post-translationally, processed by ACE to generate Met-enkephalin in the nucleus accumbens of the brain. In terms of processing, the N-terminal domain contains 6 conserved cysteines thought to be involved in disulfide bonding and/or processing.

It is found in the cytoplasmic vesicle. The protein resides in the secretory vesicle. The protein localises to the chromaffin granule lumen. Its subcellular location is the secreted. Functionally, neuropeptide that competes with and mimic the effects of opiate drugs. They play a role in a number of physiologic functions, including pain perception and responses to stress. In terms of biological role, met-enkephalin-Arg-Phe neuropeptide acts as a strong ligand of Mu-type opioid receptor OPRM1. Met-enkephalin-Arg-Phe-binding to OPRM1 in the nucleus accumbens of the brain increases activation of OPRM1, leading to long-term synaptic depression of glutamate release. Increases glutamate release in the striatum and decreases GABA concentration in the striatum. Its function is as follows. Increases glutamate release in the striatum. This chain is Proenkephalin-A (PENK), found in Mesocricetus auratus (Golden hamster).